Reading from the N-terminus, the 156-residue chain is MPRRPKYERRTIPPDPKYGSELLQRFINKVMKRGKKSLAERIVYSALDIVAQRTGQHPLEVFQRAIHNASPLLEVKPRRVGGATYQVPVQVEPHRRVSLAMRWLIQSARNRSGYKFVDKLAAEIIDAANNTGATIKKRDDTHRMAEANRAFAHYRW.

The protein belongs to the universal ribosomal protein uS7 family. Part of the 30S ribosomal subunit. Contacts proteins S9 and S11.

One of the primary rRNA binding proteins, it binds directly to 16S rRNA where it nucleates assembly of the head domain of the 30S subunit. Is located at the subunit interface close to the decoding center, probably blocks exit of the E-site tRNA. This is Small ribosomal subunit protein uS7 from Thermomicrobium roseum (strain ATCC 27502 / DSM 5159 / P-2).